The chain runs to 334 residues: L-lactate dehydrogenase B chain (334 aa).

Alanine 2 carries the N-acetylalanine modification. Residue lysine 7 is modified to N6-acetyllysine. A phosphoserine mark is found at serine 11 and serine 44. Residues 30–58 and arginine 100 contribute to the NAD(+) site; that span reads GQVG…LEDK. An N6-acetyllysine modification is found at lysine 58. Arginine 107 is a binding site for substrate. Residue lysine 119 is modified to N6-acetyllysine. Asparagine 139 lines the NAD(+) pocket. Positions 139 and 170 each coordinate substrate. The Proton acceptor role is filled by histidine 194. At tyrosine 240 the chain carries Phosphotyrosine. Position 249 (threonine 249) interacts with substrate. Residue lysine 329 is modified to N6-acetyllysine.

It belongs to the LDH/MDH superfamily. LDH family. In terms of assembly, homotetramer. Interacts with PTEN upstream reading frame protein MP31; the interaction leads to inhibition of mitochondrial lactate dehydrogenase activity, preventing conversion of lactate to pyruvate in mitochondria.

It localises to the cytoplasm. The protein localises to the mitochondrion inner membrane. It catalyses the reaction (S)-lactate + NAD(+) = pyruvate + NADH + H(+). The protein operates within fermentation; pyruvate fermentation to lactate; (S)-lactate from pyruvate: step 1/1. In terms of biological role, interconverts simultaneously and stereospecifically pyruvate and lactate with concomitant interconversion of NADH and NAD(+). This is L-lactate dehydrogenase B chain (Ldhb) from Mus musculus (Mouse).